We begin with the raw amino-acid sequence, 119 residues long: Urease subunit beta (119 aa).

Belongs to the urease beta subunit family. As to quaternary structure, heterotrimer of UreA (gamma), UreB (beta) and UreC (alpha) subunits. Three heterotrimers associate to form the active enzyme.

The protein localises to the cytoplasm. The enzyme catalyses urea + 2 H2O + H(+) = hydrogencarbonate + 2 NH4(+). It participates in nitrogen metabolism; urea degradation; CO(2) and NH(3) from urea (urease route): step 1/1. This chain is Urease subunit beta, found in Tolumonas auensis (strain DSM 9187 / NBRC 110442 / TA 4).